The sequence spans 433 residues: Deoxyguanosinetriphosphate triphosphohydrolase-like protein 2 (433 aa).

Positions 61–248 (RLTHSLEVAQ…METADDIAYT (188 aa)) constitute an HD domain.

The protein belongs to the dGTPase family. Type 2 subfamily.

This Deinococcus radiodurans (strain ATCC 13939 / DSM 20539 / JCM 16871 / CCUG 27074 / LMG 4051 / NBRC 15346 / NCIMB 9279 / VKM B-1422 / R1) protein is Deoxyguanosinetriphosphate triphosphohydrolase-like protein 2.